The following is a 325-amino-acid chain: Lipoyl synthase (325 aa).

The disordered stretch occupies residues 1 to 31 (MASDSDLLDTKPAETRHPEKAHRPDQPTLRK). Over residues 8–31 (LDTKPAETRHPEKAHRPDQPTLRK) the composition is skewed to basic and acidic residues. [4Fe-4S] cluster is bound by residues Cys61, Cys66, Cys72, Cys87, Cys91, Cys94, and Ser300. A Radical SAM core domain is found at 73–289 (WAKKHATFMI…AEIGRAKGFL (217 aa)).

The protein belongs to the radical SAM superfamily. Lipoyl synthase family. [4Fe-4S] cluster serves as cofactor.

The protein resides in the cytoplasm. It catalyses the reaction [[Fe-S] cluster scaffold protein carrying a second [4Fe-4S](2+) cluster] + N(6)-octanoyl-L-lysyl-[protein] + 2 oxidized [2Fe-2S]-[ferredoxin] + 2 S-adenosyl-L-methionine + 4 H(+) = [[Fe-S] cluster scaffold protein] + N(6)-[(R)-dihydrolipoyl]-L-lysyl-[protein] + 4 Fe(3+) + 2 hydrogen sulfide + 2 5'-deoxyadenosine + 2 L-methionine + 2 reduced [2Fe-2S]-[ferredoxin]. The protein operates within protein modification; protein lipoylation via endogenous pathway; protein N(6)-(lipoyl)lysine from octanoyl-[acyl-carrier-protein]: step 2/2. In terms of biological role, catalyzes the radical-mediated insertion of two sulfur atoms into the C-6 and C-8 positions of the octanoyl moiety bound to the lipoyl domains of lipoate-dependent enzymes, thereby converting the octanoylated domains into lipoylated derivatives. This is Lipoyl synthase from Methylocella silvestris (strain DSM 15510 / CIP 108128 / LMG 27833 / NCIMB 13906 / BL2).